The primary structure comprises 190 residues: Scytalone dehydratase-like protein Arp1 (190 aa).

Residue Y67 participates in substrate binding. Catalysis depends on residues H102 and H127. N148 is a binding site for substrate.

Belongs to the scytalone dehydratase family. As to quaternary structure, homotrimer. Each subunit contains an active site, located in the central part of the hydrophobic core of the monomer, which functions independently.

Its function is as follows. Scytalone dehydratase-like protein; part of the Pks2 gene cluster that mediates the formation of infectious structures (appressoria), enabling these fungi to kill insects faster. The product of the Pks2 gene cluster is different from the one of Pks1 and has still not been identified. This Metarhizium anisopliae (strain ARSEF 549) protein is Scytalone dehydratase-like protein Arp1.